A 257-amino-acid polypeptide reads, in one-letter code: Triosephosphate isomerase, cytosolic (257 aa).

Asn-10 and Lys-12 together coordinate substrate. The Electrophile role is filled by His-96. Residue Glu-167 is the Proton acceptor of the active site.

The protein belongs to the triosephosphate isomerase family. In terms of assembly, homodimer. As to expression, higher levels found in leaves than in roots.

It is found in the cytoplasm. It carries out the reaction D-glyceraldehyde 3-phosphate = dihydroxyacetone phosphate. The protein operates within carbohydrate biosynthesis; gluconeogenesis. It functions in the pathway carbohydrate degradation; glycolysis; D-glyceraldehyde 3-phosphate from glycerone phosphate: step 1/1. This is Triosephosphate isomerase, cytosolic (TPI) from Stellaria longipes (Longstalk starwort).